The chain runs to 437 residues: Succinate--CoA ligase [ADP-forming] subunit beta, hydrogenosomal (437 aa).

A hydrogenosome-targeting transit peptide spans 1 to 27 (MLANVTRSTSKAAPALASIAQTAQKRF). Residues 36–278 (MNLLHEYNVN…TTQEDPREVA (243 aa)) enclose the ATP-grasp domain. Residues Lys73, 80-82 (GRG), and Glu141 contribute to the ATP site. The Mg(2+) site is built by Asn233 and Asp247. Substrate contacts are provided by residues Asn299 and 356–358 (GIM).

This sequence belongs to the succinate/malate CoA ligase beta subunit family. As to quaternary structure, heterodimer of an alpha and a beta subunit. It depends on Mg(2+) as a cofactor.

It is found in the hydrogenosome. The enzyme catalyses succinate + ATP + CoA = succinyl-CoA + ADP + phosphate. Its pathway is carbohydrate metabolism; tricarboxylic acid cycle; succinate from succinyl-CoA (ligase route): step 1/1. Its function is as follows. Succinyl-CoA synthetase functions in the citric acid cycle (TCA), coupling the hydrolysis of succinyl-CoA to the synthesis of ATP and thus represents the only step of substrate-level phosphorylation in the TCA. The beta subunit provides nucleotide specificity of the enzyme and binds the substrate succinate, while the binding sites for coenzyme A and phosphate are found in the alpha subunit. This Neocallimastix frontalis (Rumen fungus) protein is Succinate--CoA ligase [ADP-forming] subunit beta, hydrogenosomal.